The primary structure comprises 122 residues: Co-chaperonin GroES (122 aa).

This sequence belongs to the GroES chaperonin family. Heptamer of 7 subunits arranged in a ring. Interacts with the chaperonin GroEL.

Its subcellular location is the cytoplasm. Its function is as follows. Together with the chaperonin GroEL, plays an essential role in assisting protein folding. The GroEL-GroES system forms a nano-cage that allows encapsulation of the non-native substrate proteins and provides a physical environment optimized to promote and accelerate protein folding. GroES binds to the apical surface of the GroEL ring, thereby capping the opening of the GroEL channel. In Aquifex aeolicus (strain VF5), this protein is Co-chaperonin GroES.